Consider the following 290-residue polypeptide: GTPase Era (290 aa).

One can recognise an Era-type G domain in the interval 2-169 (KSGFAAILGR…KNKIYENFSE (168 aa)). The segment at 10–17 (GRPSTGKS) is G1. Position 10 to 17 (10 to 17 (GRPSTGKS)) interacts with GTP. The G2 stretch occupies residues 36–40 (QTTRN). The segment at 57–60 (DTPG) is G3. Residues 57 to 61 (DTPGF) and 119 to 122 (NKID) each bind GTP. Residues 119–122 (NKID) are G4. The interval 148–150 (ISA) is G5. The KH type-2 domain occupies 200–276 (LKEELPYSLY…NLFLQVKLKK (77 aa)).

It belongs to the TRAFAC class TrmE-Era-EngA-EngB-Septin-like GTPase superfamily. Era GTPase family. Monomer.

The protein localises to the cytoplasm. The protein resides in the cell inner membrane. Functionally, an essential GTPase that binds both GDP and GTP, with rapid nucleotide exchange. Plays a role in 16S rRNA processing and 30S ribosomal subunit biogenesis and possibly also in cell cycle regulation and energy metabolism. The polypeptide is GTPase Era (Borreliella burgdorferi (strain ATCC 35210 / DSM 4680 / CIP 102532 / B31) (Borrelia burgdorferi)).